The sequence spans 84 residues: Small ribosomal subunit protein uS17 (84 aa).

This sequence belongs to the universal ribosomal protein uS17 family. In terms of assembly, part of the 30S ribosomal subunit.

In terms of biological role, one of the primary rRNA binding proteins, it binds specifically to the 5'-end of 16S ribosomal RNA. This Citrobacter koseri (strain ATCC BAA-895 / CDC 4225-83 / SGSC4696) protein is Small ribosomal subunit protein uS17.